Reading from the N-terminus, the 309-residue chain is tRNA dimethylallyltransferase (309 aa).

Position 10 to 17 (10 to 17 (GPTAVGKT)) interacts with ATP. Position 12-17 (12-17 (TAVGKT)) interacts with substrate. An interaction with substrate tRNA region spans residues 35-38 (DSMQ).

Belongs to the IPP transferase family. In terms of assembly, monomer. It depends on Mg(2+) as a cofactor.

It catalyses the reaction adenosine(37) in tRNA + dimethylallyl diphosphate = N(6)-dimethylallyladenosine(37) in tRNA + diphosphate. In terms of biological role, catalyzes the transfer of a dimethylallyl group onto the adenine at position 37 in tRNAs that read codons beginning with uridine, leading to the formation of N6-(dimethylallyl)adenosine (i(6)A). In Clostridium beijerinckii (strain ATCC 51743 / NCIMB 8052) (Clostridium acetobutylicum), this protein is tRNA dimethylallyltransferase.